Reading from the N-terminus, the 279-residue chain is NADH dehydrogenase [ubiquinone] iron-sulfur protein 3, mitochondrial (279 aa).

Residues 1–27 (MISRTLLKRSLPTVQFLRPFTRSSIRR) constitute a mitochondrion transit peptide. The segment at 249–279 (EPVGEGKDFTPESFKLPTPEPEPEKESDEKK) is disordered. Residues 270-279 (EPEKESDEKK) show a composition bias toward basic and acidic residues.

It belongs to the complex I 30 kDa subunit family. Core subunit of respiratory chain NADH dehydrogenase (Complex I).

It localises to the mitochondrion inner membrane. The enzyme catalyses a ubiquinone + NADH + 5 H(+)(in) = a ubiquinol + NAD(+) + 4 H(+)(out). Its function is as follows. Core subunit of the mitochondrial membrane respiratory chain NADH dehydrogenase (Complex I) which catalyzes electron transfer from NADH through the respiratory chain, using ubiquinone as an electron acceptor. Plays a role in cell wall integrity and is involved in osmotic and oxidative resistance, yeast to hypha transition and the ability to damage and invade oral epithelial cells. This Candida albicans (strain SC5314 / ATCC MYA-2876) (Yeast) protein is NADH dehydrogenase [ubiquinone] iron-sulfur protein 3, mitochondrial (ALI1).